A 101-amino-acid polypeptide reads, in one-letter code: Protein Tat (101 aa).

Basic and acidic residues predominate over residues methionine 1–lysine 12. The interval methionine 1–asparagine 24 is disordered. Residues methionine 1 to asparagine 24 are interaction with human CREBBP. Residues methionine 1–glycine 48 are transactivation. Positions serine 22–cysteine 37 are cysteine-rich. Cysteine 25 and cysteine 27 together coordinate Zn(2+). Lysine 28 is subject to N6-acetyllysine; by host PCAF. The Zn(2+) site is built by cysteine 30, histidine 33, cysteine 34, and cysteine 37. The segment at phenylalanine 38–glycine 48 is core. Residues isoleucine 45 to aspartate 101 are disordered. The segment covering glycine 48 to arginine 57 has biased composition (basic residues). The short motif at arginine 49–arginine 57 is the Nuclear localization signal, RNA-binding (TAR), and protein transduction element. An interaction with the host capping enzyme RNGTT region spans residues arginine 49–glutamate 86. An N6-acetyllysine; by host EP300 and GCN5L2 mark is found at lysine 50 and lysine 51. An asymmetric dimethylarginine; by host PRMT6 mark is found at arginine 52 and arginine 53. Residues histidine 65–serine 75 are compositionally biased toward polar residues. A Glycyl lysine isopeptide (Lys-Gly) (interchain with G-Cter in ubiquitin) cross-link involves residue lysine 71. The Cell attachment site motif lies at arginine 78–aspartate 80. The span at glycine 83 to aspartate 101 shows a compositional bias: basic and acidic residues.

Belongs to the lentiviruses Tat family. Interacts with host CCNT1. Associates with the P-TEFb complex composed at least of Tat, P-TEFb (CDK9 and CCNT1), TAR RNA, RNA Pol II. Recruits the HATs CREBBP, TAF1/TFIID, EP300, PCAF and GCN5L2. Interacts with host KAT5/Tip60; this interaction targets the latter to degradation. Interacts with the host deacetylase SIRT1. Interacts with host capping enzyme RNGTT; this interaction stimulates RNGTT. Binds to host KDR, and to the host integrins ITGAV/ITGB3 and ITGA5/ITGB1. Interacts with host KPNB1/importin beta-1 without previous binding to KPNA1/importin alpha-1. Interacts with EIF2AK2. Interacts with host nucleosome assembly protein NAP1L1; this interaction may be required for the transport of Tat within the nucleus, since the two proteins interact at the nuclear rim. Interacts with host C1QBP/SF2P32; this interaction involves lysine-acetylated Tat. Interacts with the host chemokine receptors CCR2, CCR3 and CXCR4. Interacts with host DPP4/CD26; this interaction may trigger an anti-proliferative effect. Interacts with host LDLR. Interacts with the host extracellular matrix metalloproteinase MMP1. Interacts with host PRMT6; this interaction mediates Tat's methylation. Interacts with, and is ubiquitinated by MDM2/Hdm2. Interacts with host PSMC3 and HTATIP2. Interacts with STAB1; this interaction may overcome SATB1-mediated repression of IL2 and IL2RA (interleukin) in T cells by binding to the same domain than HDAC1. Interacts (when acetylated) with human CDK13, thereby increasing HIV-1 mRNA splicing and promoting the production of the doubly spliced HIV-1 protein Nef. Interacts with host TBP; this interaction modulates the activity of transcriptional pre-initiation complex. Interacts with host RELA. Interacts with host PLSCR1; this interaction negatively regulates Tat transactivation activity by altering its subcellular distribution. Asymmetrical arginine methylation by host PRMT6 seems to diminish the transactivation capacity of Tat and affects the interaction with host CCNT1. In terms of processing, acetylation by EP300, CREBBP, GCN5L2/GCN5 and PCAF regulates the transactivation activity of Tat. EP300-mediated acetylation of Lys-50 promotes dissociation of Tat from the TAR RNA through the competitive binding to PCAF's bromodomain. In addition, the non-acetylated Tat's N-terminus can also interact with PCAF. PCAF-mediated acetylation of Lys-28 enhances Tat's binding to CCNT1. Lys-50 is deacetylated by SIRT1. Post-translationally, polyubiquitination by host MDM2 does not target Tat to degradation, but activates its transactivation function and fosters interaction with CCNT1 and TAR RNA. Phosphorylated by EIF2AK2 on serine and threonine residues adjacent to the basic region important for TAR RNA binding and function. Phosphorylation of Tat by EIF2AK2 is dependent on the prior activation of EIF2AK2 by dsRNA.

The protein resides in the host nucleus. It localises to the host nucleolus. The protein localises to the host cytoplasm. It is found in the secreted. Functionally, transcriptional activator that increases RNA Pol II processivity, thereby increasing the level of full-length viral transcripts. Recognizes a hairpin structure at the 5'-LTR of the nascent viral mRNAs referred to as the transactivation responsive RNA element (TAR) and recruits the cyclin T1-CDK9 complex (P-TEFb complex) that will in turn hyperphosphorylate the RNA polymerase II to allow efficient elongation. The CDK9 component of P-TEFb and other Tat-activated kinases hyperphosphorylate the C-terminus of RNA Pol II that becomes stabilized and much more processive. Other factors such as HTATSF1/Tat-SF1, SUPT5H/SPT5, and HTATIP2 are also important for Tat's function. Besides its effect on RNA Pol II processivity, Tat induces chromatin remodeling of proviral genes by recruiting the histone acetyltransferases (HATs) CREBBP, EP300 and PCAF to the chromatin. This also contributes to the increase in proviral transcription rate, especially when the provirus integrates in transcriptionally silent region of the host genome. To ensure maximal activation of the LTR, Tat mediates nuclear translocation of NF-kappa-B by interacting with host RELA. Through its interaction with host TBP, Tat may also modulate transcription initiation. Tat can reactivate a latently infected cell by penetrating in it and transactivating its LTR promoter. In the cytoplasm, Tat is thought to act as a translational activator of HIV-1 mRNAs. In terms of biological role, extracellular circulating Tat can be endocytosed by surrounding uninfected cells via the binding to several surface receptors such as CD26, CXCR4, heparan sulfate proteoglycans (HSPG) or LDLR. Neurons are rarely infected, but they internalize Tat via their LDLR. Through its interaction with nuclear HATs, Tat is potentially able to control the acetylation-dependent cellular gene expression. Modulates the expression of many cellular genes involved in cell survival, proliferation or in coding for cytokines or cytokine receptors. Tat plays a role in T-cell and neurons apoptosis. Tat induced neurotoxicity and apoptosis probably contribute to neuroAIDS. Circulating Tat also acts as a chemokine-like and/or growth factor-like molecule that binds to specific receptors on the surface of the cells, affecting many cellular pathways. In the vascular system, Tat binds to ITGAV/ITGB3 and ITGA5/ITGB1 integrins dimers at the surface of endothelial cells and competes with bFGF for heparin-binding sites, leading to an excess of soluble bFGF. This is Protein Tat from Homo sapiens (Human).